The sequence spans 193 residues: Tellurium resistance protein TerZ (193 aa).

The protein belongs to the CAPAB/TerDEXZ family.

In terms of biological role, not known; seems to contribute to the tellurium resistance (Ter) mechanism. Also involved in phage inhibition (Phi) and colicin resistance (PacB). The protein is Tellurium resistance protein TerZ (terZ) of Serratia marcescens.